Here is a 537-residue protein sequence, read N- to C-terminus: Tyrosine-protein phosphatase CDC14 homolog (537 aa).

The Tyrosine-protein phosphatase domain maps to 182–345; it reads DFNWISPKFI…QVHFRAYFYE (164 aa). The Phosphocysteine intermediate role is filled by Cys286. Residues 359–537 form a disordered region; it reads EPLATPPRHP…PKPSKSRLIS (179 aa). Positions 370–382 are enriched in polar residues; sequence NATNGTSQSNIST. A compositionally biased stretch (low complexity) spans 400–411; the sequence is PPSARRLPSASS. Residues 421–437 show a composition bias toward polar residues; the sequence is ASKQSIQNENKASYSSY. Phosphothreonine is present on Thr453. A phosphoserine mark is found at Ser468 and Ser470. Residues 490–502 show a composition bias toward low complexity; it reads RRTSGNRWSSGSS. At Ser513 the chain carries Phosphoserine. Over residues 514-523 the composition is skewed to polar residues; that stretch reads MSSLNNTSNG. Basic residues predominate over residues 526–537; sequence AKPKPSKSRLIS.

Belongs to the protein-tyrosine phosphatase family. Non-receptor class CDC14 subfamily. In terms of assembly, interacts with ark1 at the kinetochores. Interacts with bir1, cdc25, mid1, nbl1, pic1, and rad24. In terms of processing, phosphorylated by cds1, chk1, pmk1, and cdc2 upon Hydroxylurea and H(2)O(2) stress treatment. Phosphorylation regulates the nucleolar-to-nucleoplasmic transition. Is able to autodephosphorylate.

It localises to the nucleus. It is found in the nucleolus. The protein resides in the cytoplasm. The protein localises to the cytoskeleton. Its subcellular location is the microtubule organizing center. It localises to the spindle pole body. It carries out the reaction O-phospho-L-tyrosyl-[protein] + H2O = L-tyrosyl-[protein] + phosphate. Protein phosphatase which antagonizes mitotic cyclin-dependent kinase cdc2, the inactivation of which is essential for exit from mitosis. To access its substrates, is released from nucleolar sequestration during mitosis. Plays an essential in coordinating the nuclear division cycle with cytokinesis through the cytokinesis checkpoint. Involved in chromosome segregation, where it is required for meiosis I spindle dissambly as well as for establishing two consecutive chromosome segregation phases. Allows damaged actomyosin rings to be maintained to facilitate completion of cell division in response to minor perturbation of the cell division machinery. Dephosphorylates the mitotic inducer cdc25 for its rapid degradation. Down-regulation of cdc25 activity ensures a prompt inactivation of mitotic cdc2 complexes to trigger cell division. Also dephosphorylates cdc2-phosphorylated nsk1, allowing nsk1-binding to kinetochores and spindle. Dephosphorylates ase1, which is essential for spindle midzone assembly and for continuous extension of the anaphase spindle. Tethered to the contractile ring by mid1, where it dephosphorylates cdc15. This Schizosaccharomyces pombe (strain 972 / ATCC 24843) (Fission yeast) protein is Tyrosine-protein phosphatase CDC14 homolog (clp1).